The chain runs to 185 residues: Ribosome-recycling factor (185 aa).

The interval 143–163 is disordered; that stretch reads RKDGEAGEDEVARAEKDLDKS.

The protein belongs to the RRF family.

The protein localises to the cytoplasm. Functionally, responsible for the release of ribosomes from messenger RNA at the termination of protein biosynthesis. May increase the efficiency of translation by recycling ribosomes from one round of translation to another. The polypeptide is Ribosome-recycling factor (Mycobacterium marinum (strain ATCC BAA-535 / M)).